The sequence spans 89 residues: Small ribosomal subunit protein uS15 (89 aa).

The segment covering 1-21 (MAITQERKNQLINEFKTHESD) has biased composition (basic and acidic residues). Positions 1-24 (MAITQERKNQLINEFKTHESDTGS) are disordered.

It belongs to the universal ribosomal protein uS15 family. As to quaternary structure, part of the 30S ribosomal subunit. Forms a bridge to the 50S subunit in the 70S ribosome, contacting the 23S rRNA.

Its function is as follows. One of the primary rRNA binding proteins, it binds directly to 16S rRNA where it helps nucleate assembly of the platform of the 30S subunit by binding and bridging several RNA helices of the 16S rRNA. In terms of biological role, forms an intersubunit bridge (bridge B4) with the 23S rRNA of the 50S subunit in the ribosome. This Bacillus subtilis (strain 168) protein is Small ribosomal subunit protein uS15.